We begin with the raw amino-acid sequence, 552 residues long: Protein TRM32 (552 aa).

The segment at 295-379 (TDLPRDSSTS…NKTAEKTETL (85 aa)) is disordered. The span at 331-351 (VRAEKEEKYEVQEERSQENHL) shows a compositional bias: basic and acidic residues. Residues 352–371 (DSSNQRILQQEPDSVPSTNK) show a composition bias toward polar residues.

This is Protein TRM32 (TRM32) from Arabidopsis thaliana (Mouse-ear cress).